Reading from the N-terminus, the 542-residue chain is Formate--tetrahydrofolate ligase (542 aa).

53-60 (TPAGEGKT) is a binding site for ATP.

It belongs to the formate--tetrahydrofolate ligase family.

The enzyme catalyses (6S)-5,6,7,8-tetrahydrofolate + formate + ATP = (6R)-10-formyltetrahydrofolate + ADP + phosphate. It functions in the pathway one-carbon metabolism; tetrahydrofolate interconversion. The sequence is that of Formate--tetrahydrofolate ligase from Thermotoga maritima (strain ATCC 43589 / DSM 3109 / JCM 10099 / NBRC 100826 / MSB8).